The sequence spans 640 residues: Probable potassium transport system protein Kup (640 aa).

The next 12 helical transmembrane spans lie at 26 to 46 (IAGL…TSPL), 69 to 89 (ILSL…VLFI), 117 to 137 (AWVL…DGMI), 155 to 175 (PAFR…LFVI), 186 to 206 (IFGP…IAGI), 224 to 244 (FFAD…LAIT), 265 to 285 (WFLV…ALIL), 297 to 317 (LLVP…ATII), 355 to 375 (IYVP…VVGF), 384 to 404 (AYGI…FVVV), 415 to 435 (AGLF…ATTV), and 437 to 457 (ILAG…LLTT).

The protein belongs to the HAK/KUP transporter (TC 2.A.72) family.

It localises to the cell inner membrane. The enzyme catalyses K(+)(in) + H(+)(in) = K(+)(out) + H(+)(out). Functionally, transport of potassium into the cell. Likely operates as a K(+):H(+) symporter. This chain is Probable potassium transport system protein Kup, found in Aromatoleum aromaticum (strain DSM 19018 / LMG 30748 / EbN1) (Azoarcus sp. (strain EbN1)).